The following is a 181-amino-acid chain: Large ribosomal subunit protein uL5c (181 aa).

Belongs to the universal ribosomal protein uL5 family. Part of the 50S ribosomal subunit; contacts the 5S rRNA.

Its subcellular location is the plastid. It localises to the cyanelle. Its function is as follows. Binds 5S rRNA, forms part of the central protuberance of the 50S subunit. In Cyanophora paradoxa, this protein is Large ribosomal subunit protein uL5c (rpl5).